The sequence spans 89 residues: Small ribosomal subunit protein uS15 (89 aa).

It belongs to the universal ribosomal protein uS15 family. In terms of assembly, part of the 30S ribosomal subunit. Forms a bridge to the 50S subunit in the 70S ribosome, contacting the 23S rRNA.

In terms of biological role, one of the primary rRNA binding proteins, it binds directly to 16S rRNA where it helps nucleate assembly of the platform of the 30S subunit by binding and bridging several RNA helices of the 16S rRNA. Its function is as follows. Forms an intersubunit bridge (bridge B4) with the 23S rRNA of the 50S subunit in the ribosome. The protein is Small ribosomal subunit protein uS15 of Bradyrhizobium sp. (strain ORS 278).